The sequence spans 631 residues: Pescadillo homolog (631 aa).

The BRCT domain maps to 321-414 (RLRTLFKGLK…QLLPTNDYFL (94 aa)). A compositionally biased stretch (basic and acidic residues) spans 428–442 (SKRDSYIPPEEKALH). Disordered stretches follow at residues 428–471 (SKRD…EADQ), 489–561 (YKKY…VDEH), and 602–631 (ADNKEAKKAAKREARKQAAEAAARAAKLVK). Phosphoserine is present on residues S453 and S457. Composition is skewed to acidic residues over residues 453–471 (SEEESEEDEAEKEEEEADQ) and 498–525 (VNEDEEDLSEEDDEEDDDEEDVDKEDVD). Residues 526–538 (EQTKRKQQEKEKM) show a composition bias toward basic and acidic residues. Positions 544–553 (KVHKVNKRQV) are enriched in basic residues. Residues 591 to 631 (WLLRKKRRNIDADNKEAKKAAKREARKQAAEAAARAAKLVK) adopt a coiled-coil conformation. Basic and acidic residues predominate over residues 602-619 (ADNKEAKKAAKREARKQA). Residues 620–631 (AEAAARAAKLVK) show a composition bias toward low complexity.

The protein belongs to the pescadillo family.

The protein localises to the nucleus. It is found in the nucleolus. Its subcellular location is the nucleoplasm. Functionally, required for maturation of ribosomal RNAs and formation of the large ribosomal subunit. In Drosophila pseudoobscura pseudoobscura (Fruit fly), this protein is Pescadillo homolog.